Reading from the N-terminus, the 226-residue chain is 26S proteasome non-ATPase regulatory subunit 10 (226 aa).

Residues 1–37 are required for nuclear localization; that stretch reads MEGCVSNLMVCNLAYSGKLEELKESILADKSLATRTD. Residues 1-71 are interaction with RB1; the sequence is MEGCVSNLMV…LGVPVNDKDD (71 aa). ANK repeat units lie at residues 3–36, 37–69, 70–102, 103–135, 136–168, 169–201, and 202–226; these read GCVS…ATRT, DQDS…VNDK, DDAG…VNAV, NQNG…PDAK, DHYE…TNIQ, DTEG…IYIE, and NKEE…MVEG. The tract at residues 39-226 is interaction with RELA; the sequence is DSRTALHWAC…GLILKRMVEG (188 aa). The interaction with RB1 stretch occupies residues 171–226; it reads EGNTPLHLACDEERVEEAKLLVSQGASIYIENKEEKTPLQVAKGGLGLILKRMVEG.

Part of transient complex containing PSMD10, PSMC4, PSMC5 and PAAF1 formed during the assembly of the 26S proteasome. Stays associated throughout the assembly of the PA700/19S RC and is released upon association with the 20S core. Interacts with PSMC4. Interacts with RB1. Interacts with CDK4. Interacts with MDM2. Interacts with RELA. Associates with a CDK4:CCND2 serine/threonine kinase complex. Interacts with ARHGDIA and increases the interaction between ARHGDIA and RHOA, hence promotes ARHGDIA inactivation of RHOA and ROCK. Tends to be up-regulated in cancer cells with RAS mutations, including lung cancers and adenocarconimas (at protein level).

It localises to the cytoplasm. It is found in the nucleus. Functionally, acts as a chaperone during the assembly of the 26S proteasome, specifically of the PA700/19S regulatory complex (RC). In the initial step of the base subcomplex assembly is part of an intermediate PSMD10:PSMC4:PSMC5:PAAF1 module which probably assembles with a PSMD5:PSMC2:PSMC1:PSMD2 module. Independently of the proteasome, regulates EGF-induced AKT activation through inhibition of the RHOA/ROCK/PTEN pathway, leading to prolonged AKT activation. Plays an important role in RAS-induced tumorigenesis. Its function is as follows. Acts as an proto-oncoprotein by being involved in negative regulation of tumor suppressors RB1 and p53/TP53. Overexpression is leading to phosphorylation of RB1 and proteasomal degradation of RB1. Regulates CDK4-mediated phosphorylation of RB1 by competing with CDKN2A for binding with CDK4. Facilitates binding of MDM2 to p53/TP53 and the mono- and polyubiquitination of p53/TP53 by MDM2 suggesting a function in targeting the TP53:MDM2 complex to the 26S proteasome. Involved in p53-independent apoptosis. Involved in regulation of NF-kappa-B by retaining it in the cytoplasm. Binds to the NF-kappa-B component RELA and accelerates its XPO1/CRM1-mediated nuclear export. This is 26S proteasome non-ATPase regulatory subunit 10 (PSMD10) from Homo sapiens (Human).